A 259-amino-acid polypeptide reads, in one-letter code: Phosphate import ATP-binding protein PstB (259 aa).

The ABC transporter domain occupies 11-254 (AESKNLNFYY…PDNPRTEDYI (244 aa)). 43-50 (GPSGCGKS) serves as a coordination point for ATP.

Belongs to the ABC transporter superfamily. Phosphate importer (TC 3.A.1.7) family. In terms of assembly, the complex is composed of two ATP-binding proteins (PstB), two transmembrane proteins (PstC and PstA) and a solute-binding protein (PstS).

It is found in the cell inner membrane. It catalyses the reaction phosphate(out) + ATP + H2O = ADP + 2 phosphate(in) + H(+). Functionally, part of the ABC transporter complex PstSACB involved in phosphate import. Responsible for energy coupling to the transport system. In Geobacter sulfurreducens (strain ATCC 51573 / DSM 12127 / PCA), this protein is Phosphate import ATP-binding protein PstB.